The chain runs to 51 residues: Ovomucoid (51 aa).

The Kazal-like domain occupies 3 to 51 (IDCSGYPKPACTLEFFPLCGSDNQTYSNKCAFCNAAVEKNVTLNHIGEC). Disulfide bonds link cysteine 5-cysteine 35, cysteine 13-cysteine 32, and cysteine 21-cysteine 51. Asparagine 42 is a glycosylation site (N-linked (GlcNAc...) asparagine).

The protein localises to the secreted. This chain is Ovomucoid, found in Eudromia elegans (Elegant crested-tinamou).